The chain runs to 352 residues: UDP-N-acetylglucosamine--N-acetylmuramyl-(pentapeptide) pyrophosphoryl-undecaprenol N-acetylglucosamine transferase 2 (352 aa).

UDP-N-acetyl-alpha-D-glucosamine contacts are provided by residues 11 to 13 (SAG), R164, S194, and Q289.

The protein belongs to the glycosyltransferase 28 family. MurG subfamily.

Its subcellular location is the cell membrane. It catalyses the reaction di-trans,octa-cis-undecaprenyl diphospho-N-acetyl-alpha-D-muramoyl-L-alanyl-D-glutamyl-meso-2,6-diaminopimeloyl-D-alanyl-D-alanine + UDP-N-acetyl-alpha-D-glucosamine = di-trans,octa-cis-undecaprenyl diphospho-[N-acetyl-alpha-D-glucosaminyl-(1-&gt;4)]-N-acetyl-alpha-D-muramoyl-L-alanyl-D-glutamyl-meso-2,6-diaminopimeloyl-D-alanyl-D-alanine + UDP + H(+). The protein operates within cell wall biogenesis; peptidoglycan biosynthesis. In terms of biological role, cell wall formation. Catalyzes the transfer of a GlcNAc subunit on undecaprenyl-pyrophosphoryl-MurNAc-pentapeptide (lipid intermediate I) to form undecaprenyl-pyrophosphoryl-MurNAc-(pentapeptide)GlcNAc (lipid intermediate II). The protein is UDP-N-acetylglucosamine--N-acetylmuramyl-(pentapeptide) pyrophosphoryl-undecaprenol N-acetylglucosamine transferase 2 of Bacillus thuringiensis subsp. konkukian (strain 97-27).